A 262-amino-acid polypeptide reads, in one-letter code: ATP synthase subunit a (262 aa).

6 helical membrane passes run alanine 24–phenylalanine 44, valine 84–leucine 104, aspartate 129–valine 149, proline 165–alanine 185, leucine 194–alanine 214, and leucine 228–leucine 248.

This sequence belongs to the ATPase A chain family. F-type ATPases have 2 components, CF(1) - the catalytic core - and CF(0) - the membrane proton channel. CF(1) has five subunits: alpha(3), beta(3), gamma(1), delta(1), epsilon(1). CF(0) has three main subunits: a(1), b(2) and c(9-12). The alpha and beta chains form an alternating ring which encloses part of the gamma chain. CF(1) is attached to CF(0) by a central stalk formed by the gamma and epsilon chains, while a peripheral stalk is formed by the delta and b chains.

It localises to the cell inner membrane. Functionally, key component of the proton channel; it plays a direct role in the translocation of protons across the membrane. The sequence is that of ATP synthase subunit a from Actinobacillus pleuropneumoniae serotype 7 (strain AP76).